Consider the following 413-residue polypeptide: Histidinol-phosphate aminotransferase, chloroplastic (413 aa).

A chloroplast-targeting transit peptide spans 1 to 35; sequence MGVIELCNTSSICIGRAKPSCCSIERNQRRRIICM. Lys-273 is subject to N6-(pyridoxal phosphate)lysine.

The protein belongs to the class-II pyridoxal-phosphate-dependent aminotransferase family. Histidinol-phosphate aminotransferase subfamily. In terms of assembly, homodimer. The cofactor is pyridoxal 5'-phosphate. As to expression, mainly expressed in green tissues.

The protein resides in the plastid. The protein localises to the chloroplast. It catalyses the reaction L-histidinol phosphate + 2-oxoglutarate = 3-(imidazol-4-yl)-2-oxopropyl phosphate + L-glutamate. It participates in amino-acid biosynthesis; L-histidine biosynthesis; L-histidine from 5-phospho-alpha-D-ribose 1-diphosphate: step 7/9. The sequence is that of Histidinol-phosphate aminotransferase, chloroplastic (HPA) from Nicotiana tabacum (Common tobacco).